The chain runs to 114 residues: UPF0757 protein YmgG (114 aa).

The protein belongs to the UPF0757 family.

This Shigella flexneri protein is UPF0757 protein YmgG.